Reading from the N-terminus, the 203-residue chain is MMQDVSSSPVSPADDSLSNSEEEPDRQQPQSGKRGGRKRRSSRRSAGGGAGPGGAAGGGVGGGDEPGSPAQGKRGKKSAGCGGGGGSAGGGGGSSSGGGSPQSYEELQTQRVMANVRERQRTQSLNEAFAALRKIIPTLPSDKLSKIQTLKLAARYIDFLYQVLQSDELDSKMASCSYVAHERLSYAFSVWRMEGAWSMSASH.

The span at 1-18 (MMQDVSSSPVSPADDSLS) shows a compositional bias: low complexity. The interval 1–106 (MMQDVSSSPV…GGGSPQSYEE (106 aa)) is disordered. Positions 34-43 (RGGRKRRSSR) are enriched in basic residues. Gly residues-rich tracts occupy residues 46-65 (AGGG…GGDE) and 80-100 (GCGG…GGGS). In terms of domain architecture, bHLH spans 109–160 (TQRVMANVRERQRTQSLNEAFAALRKIIPTLPSDKLSKIQTLKLAARYIDFL). Positions 162 to 192 (QVLQSDELDSKMASCSYVAHERLSYAFSVWR) are sufficient for transactivation activity.

In terms of assembly, efficient DNA binding requires dimerization with another bHLH protein. Homodimer or heterodimer with E proteins such as TCF3. ID1 binds preferentially to TCF3 but does not interact efficiently with TWIST1 so ID1 levels control the amount of TCF3 available to dimerize with TWIST and thus determine the type of dimer formed.

It is found in the nucleus. Acts as a transcriptional regulator. Inhibits myogenesis by sequestrating E proteins, inhibiting trans-activation by MEF2, and inhibiting DNA-binding by MYOD1 through physical interaction. This interaction probably involves the basic domains of both proteins. Also represses expression of pro-inflammatory cytokines such as TNFA and IL1B. Regulates cranial suture patterning and fusion. Activates transcription as a heterodimer with E proteins. Regulates gene expression differentially, depending on dimer composition. Homodimers induce expression of FGFR2 and POSTN while heterodimers repress FGFR2 and POSTN expression and induce THBS1 expression. Heterodimerization is also required for osteoblast differentiation. Represses the activity of the circadian transcriptional activator: NPAS2-BMAL1 heterodimer. The polypeptide is Twist-related protein 1 (TWIST1) (Saguinus oedipus (Cotton-top tamarin)).